The chain runs to 481 residues: Serine/threonine-protein kinase US3 (481 aa).

The interval 12–63 (GQGRRKEEAVPPETKPSRVFPHGPFYTPAEDACLDSPPPETPKPSHTTPPSE) is disordered. A Protein kinase domain is found at 191–478 (FTIHGALTPG…AAELLCLPLF (288 aa)). ATP contacts are provided by residues 197–205 (LTPGSEGCV) and K220. The active-site Proton acceptor is the D305.

It belongs to the protein kinase superfamily. Ser/Thr protein kinase family. In terms of assembly, interacts with host LAT; this interaction prevents LAT activation of TRAF6. Phosphorylated by UL13; this phosphorylation regulates subsequent phosphorylation of UL31 and UL34 by US3. Autophosphorylated.

Its subcellular location is the host cytoplasm. The protein localises to the host nucleus. The catalysed reaction is L-seryl-[protein] + ATP = O-phospho-L-seryl-[protein] + ADP + H(+). It carries out the reaction L-threonyl-[protein] + ATP = O-phospho-L-threonyl-[protein] + ADP + H(+). Functionally, multifunctional serine/threonine kinase that plays a role in several processes including egress of virus particles from the nucleus, modulation of the actin cytoskeleton and inhibition of host immune response. Phosphorylates UL31 and UL34, two critical regulators of capsid budding from nucleus to endoplasmic reticulum, thereby facilitating virion egress. Modulates and redistributes host components of the nuclear envelope, including LMNA, emerin/EMD and the nuclear matrix protein MATR3. In turn, facilitates nuclear pore impairment and capsid release through impaired nuclear envelope. Phosphorylates envelope glycoprotein B (gB), probably to direct it to the cell surface. Promotes virus intracellular spread by restructuring host cell cytoskeleton. Blocks host apoptosis to extend cell survival and allow efficient viral replication. Promotes viral gene expression by phosphorylating host HDAC2 to reduce viral genome silencing. Strongly inhibits TCR-activated signal transduction in T-cells by reducing the ubiquitination of LAT and TRAF6, leading to a suboptimal activation of LAT. Subverts host antiviral innate immunity by inhibiting type I interferon production through hyperphosphorylation of beta-catenin/CTNNB1. In addition, phosphorylates the RNA sensor RIGI and the transcription factor IRF3 to prevent the RLR-mediated antiviral signaling pathway. Hyperphosphorylates host RELA and thereby dampens NF-kappa-B signaling. Acts as an immunoevasin partly responsible for inhibition of MR1 expression and antigen presentation in response to bacterial infection. This Human herpesvirus 1 (strain 17) (HHV-1) protein is Serine/threonine-protein kinase US3 (US3).